Reading from the N-terminus, the 181-residue chain is Keratin-associated protein 4-5 (181 aa).

Repeat copies occupy residues 5-9 (CCGSV), 20-24 (CCRPS), 25-29 (CCQTT), 30-34 (CCRTT), 35-39 (CCRPS), 40-44 (CCKPQ), 45-49 (CCQSV), 55-59 (CCHPS), 60-64 (CCISS), 65-69 (CCRPY), 70-74 (CCESS), 75-79 (CCRPC), 80-84 (CCQTT), 85-89 (CCRTT), 90-94 (CCRTT), 95-99 (CCCPS), 100-104 (CCVSS), 105-109 (CCRPQ), 110-114 (CCQSV), 115-119 (CCQPT), 120-124 (CCRPS), 125-129 (CCISS), 130-134 (CCHPS), 135-139 (CCESS), 140-144 (CCRPC), and 145-149 (CCVRP). The tract at residues 5–154 (CCGSVSSEQS…CCVRPVCGRV (150 aa)) is 26 X 5 AA repeats of C-C-[GRQVCHIEK]-[SPTR]-[VSTQYC].

This sequence belongs to the KRTAP type 4 family. Interacts with hair keratins. As to expression, expressed in the hair follicles.

Functionally, in the hair cortex, hair keratin intermediate filaments are embedded in an interfilamentous matrix, consisting of hair keratin-associated proteins (KRTAP), which are essential for the formation of a rigid and resistant hair shaft through their extensive disulfide bond cross-linking with abundant cysteine residues of hair keratins. The matrix proteins include the high-sulfur and high-glycine-tyrosine keratins. In Homo sapiens (Human), this protein is Keratin-associated protein 4-5 (KRTAP4-5).